Here is a 145-residue protein sequence, read N- to C-terminus: Large ribosomal subunit protein uL24 (145 aa).

Disordered regions lie at residues 1–21 (MKFN…HFNA) and 122–145 (KAKS…KMQE). Lysine 136 is covalently cross-linked (Glycyl lysine isopeptide (Lys-Gly) (interchain with G-Cter in SUMO2)). Phosphothreonine is present on threonine 139.

This sequence belongs to the universal ribosomal protein uL24 family. As to quaternary structure, component of the large ribosomal subunit. Interacts with DHX33. In terms of processing, ufmylated by UFL1 in response to endoplasmic reticulum stress, promoting reticulophagy of endoplasmic reticulum sheets.

It is found in the cytoplasm. Its function is as follows. Component of the large ribosomal subunit. The ribosome is a large ribonucleoprotein complex responsible for the synthesis of proteins in the cell. This is Large ribosomal subunit protein uL24 (Rpl26) from Rattus norvegicus (Rat).